We begin with the raw amino-acid sequence, 220 residues long: Urease accessory protein UreF (220 aa).

The protein belongs to the UreF family. UreD, UreF and UreG form a complex that acts as a GTP-hydrolysis-dependent molecular chaperone, activating the urease apoprotein by helping to assemble the nickel containing metallocenter of UreC. The UreE protein probably delivers the nickel.

It localises to the cytoplasm. Functionally, required for maturation of urease via the functional incorporation of the urease nickel metallocenter. This Bordetella parapertussis (strain 12822 / ATCC BAA-587 / NCTC 13253) protein is Urease accessory protein UreF.